We begin with the raw amino-acid sequence, 76 residues long: Sec-independent protein translocase protein TatA (76 aa).

Residues Met1–Gly21 form a helical membrane-spanning segment. Positions Met43 to Ala76 are disordered. A compositionally biased stretch (basic and acidic residues) spans Asn64–Ala76.

It belongs to the TatA/E family. The Tat system comprises two distinct complexes: a TatABC complex, containing multiple copies of TatA, TatB and TatC subunits, and a separate TatA complex, containing only TatA subunits. Substrates initially bind to the TatABC complex, which probably triggers association of the separate TatA complex to form the active translocon.

It localises to the cell inner membrane. Part of the twin-arginine translocation (Tat) system that transports large folded proteins containing a characteristic twin-arginine motif in their signal peptide across membranes. TatA could form the protein-conducting channel of the Tat system. In Burkholderia multivorans (strain ATCC 17616 / 249), this protein is Sec-independent protein translocase protein TatA.